The chain runs to 198 residues: MSNLNNLTSKILNDAEEKKKYILADAEAQKDKIISKKTNRAEADKEEIITKANIEAEVKKARIISNAKLSVRNDMLRAKQDVISKVFNEAIEKLQNLSNGDYKYYVISTLDSLELEGTEVIIINEKDKDIFSNEFLEALNKELESKGKKGSITLNMEGKFNGGFILDRNGIQINNTFEALINSLRGELEFEVNKVLFD.

This sequence belongs to the V-ATPase E subunit family.

Functionally, produces ATP from ADP in the presence of a proton gradient across the membrane. The sequence is that of V-type ATP synthase subunit E from Clostridium perfringens (strain ATCC 13124 / DSM 756 / JCM 1290 / NCIMB 6125 / NCTC 8237 / Type A).